The chain runs to 500 residues: ATP synthase subunit alpha (500 aa).

Residue 169-176 coordinates ATP; sequence GDRQTGKT.

It belongs to the ATPase alpha/beta chains family. F-type ATPases have 2 components, CF(1) - the catalytic core - and CF(0) - the membrane proton channel. CF(1) has five subunits: alpha(3), beta(3), gamma(1), delta(1), epsilon(1). CF(0) has three main subunits: a(1), b(2) and c(9-12). The alpha and beta chains form an alternating ring which encloses part of the gamma chain. CF(1) is attached to CF(0) by a central stalk formed by the gamma and epsilon chains, while a peripheral stalk is formed by the delta and b chains.

The protein localises to the cell membrane. It catalyses the reaction ATP + H2O + 4 H(+)(in) = ADP + phosphate + 5 H(+)(out). Produces ATP from ADP in the presence of a proton gradient across the membrane. The alpha chain is a regulatory subunit. This chain is ATP synthase subunit alpha, found in Clostridioides difficile (strain 630) (Peptoclostridium difficile).